Reading from the N-terminus, the 610-residue chain is UvrABC system protein C (610 aa).

The 79-residue stretch at 16 to 94 (SQPGVYRMYD…IKLYQPRYNV (79 aa)) folds into the GIY-YIG domain. A UVR domain is found at 204–239 (DQVLTQLIARMEKASQDLAFEEAARIRDQIQAVRRV).

Belongs to the UvrC family. Interacts with UvrB in an incision complex.

Its subcellular location is the cytoplasm. The UvrABC repair system catalyzes the recognition and processing of DNA lesions. UvrC both incises the 5' and 3' sides of the lesion. The N-terminal half is responsible for the 3' incision and the C-terminal half is responsible for the 5' incision. This Salmonella gallinarum (strain 287/91 / NCTC 13346) protein is UvrABC system protein C.